A 240-amino-acid polypeptide reads, in one-letter code: UDP-2,3-diacylglucosamine hydrolase (240 aa).

Mn(2+) contacts are provided by D8, H10, D41, N79, and H114. N79–R80 serves as a coordination point for substrate. Substrate-binding residues include D122, S160, N164, K167, and H195. Mn(2+) contacts are provided by H195 and H197.

Belongs to the LpxH family. Requires Mn(2+) as cofactor.

It is found in the cell inner membrane. It carries out the reaction UDP-2-N,3-O-bis[(3R)-3-hydroxytetradecanoyl]-alpha-D-glucosamine + H2O = 2-N,3-O-bis[(3R)-3-hydroxytetradecanoyl]-alpha-D-glucosaminyl 1-phosphate + UMP + 2 H(+). It participates in glycolipid biosynthesis; lipid IV(A) biosynthesis; lipid IV(A) from (3R)-3-hydroxytetradecanoyl-[acyl-carrier-protein] and UDP-N-acetyl-alpha-D-glucosamine: step 4/6. Functionally, hydrolyzes the pyrophosphate bond of UDP-2,3-diacylglucosamine to yield 2,3-diacylglucosamine 1-phosphate (lipid X) and UMP by catalyzing the attack of water at the alpha-P atom. Involved in the biosynthesis of lipid A, a phosphorylated glycolipid that anchors the lipopolysaccharide to the outer membrane of the cell. This is UDP-2,3-diacylglucosamine hydrolase from Yersinia enterocolitica serotype O:8 / biotype 1B (strain NCTC 13174 / 8081).